The chain runs to 225 residues: Two-component response regulator ARR8 (225 aa).

A Response regulatory domain is found at 10 to 145 (HVLAVDDSLF…DLTKLKPHMM (136 aa)). A 4-aspartylphosphate modification is found at Asp-78.

The protein belongs to the ARR family. Type-A subfamily. Post-translationally, two-component system major event consists of a His-to-Asp phosphorelay between a sensor histidine kinase (HK) and a response regulator (RR). In plants, the His-to-Asp phosphorelay involves an additional intermediate named Histidine-containing phosphotransfer protein (HPt). This multistep phosphorelay consists of a His-Asp-His-Asp sequential transfer of a phosphate group between first a His and an Asp of the HK protein, followed by the transfer to a conserved His of the HPt protein and finally the transfer to an Asp in the receiver domain of the RR protein. In terms of tissue distribution, predominantly expressed in roots.

Its subcellular location is the nucleus. Functionally, functions as a response regulator involved in His-to-Asp phosphorelay signal transduction system. Phosphorylation of the Asp residue in the receiver domain activates the ability of the protein to promote the transcription of target genes. Type-A response regulators seem to act as negative regulators of the cytokinin signaling. The polypeptide is Two-component response regulator ARR8 (ARR8) (Arabidopsis thaliana (Mouse-ear cress)).